Reading from the N-terminus, the 189-residue chain is Protein CotJC (189 aa).

The protein belongs to the manganese catalase family.

Its function is as follows. The cotJ operon proteins affect spore coat composition. They are either required for the normal formation of the inner layers of the coat or are themselves structural components of the coat. This Bacillus subtilis (strain 168) protein is Protein CotJC (cotJC).